The following is a 394-amino-acid chain: Argininosuccinate synthase (394 aa).

Residues 7-15 (AYSGGLDTS) and alanine 34 each bind ATP. Residues tyrosine 85 and serine 90 each coordinate L-citrulline. Glycine 115 provides a ligand contact to ATP. 3 residues coordinate L-aspartate: threonine 117, asparagine 121, and aspartate 122. L-citrulline is bound at residue asparagine 121. L-citrulline is bound by residues arginine 125, serine 176, serine 185, glutamate 261, and tyrosine 273.

This sequence belongs to the argininosuccinate synthase family. Type 1 subfamily. In terms of assembly, homotetramer.

The protein resides in the cytoplasm. It carries out the reaction L-citrulline + L-aspartate + ATP = 2-(N(omega)-L-arginino)succinate + AMP + diphosphate + H(+). The protein operates within amino-acid biosynthesis; L-arginine biosynthesis; L-arginine from L-ornithine and carbamoyl phosphate: step 2/3. This is Argininosuccinate synthase from Ehrlichia ruminantium (strain Welgevonden).